The chain runs to 322 residues: Phosphatidylserine decarboxylase proenzyme (322 aa).

Active-site charge relay system; for autoendoproteolytic cleavage activity residues include Asp-90, His-147, and Ser-254. The active-site Schiff-base intermediate with substrate; via pyruvic acid; for decarboxylase activity is the Ser-254. At Ser-254 the chain carries Pyruvic acid (Ser); by autocatalysis. The tract at residues 293-322 (PDAEPAPLPAEEIEAEHDASPLVDDKKDQV) is disordered. A compositionally biased stretch (basic and acidic residues) spans 308–322 (EHDASPLVDDKKDQV).

This sequence belongs to the phosphatidylserine decarboxylase family. PSD-B subfamily. Prokaryotic type I sub-subfamily. Heterodimer of a large membrane-associated beta subunit and a small pyruvoyl-containing alpha subunit. Requires pyruvate as cofactor. In terms of processing, is synthesized initially as an inactive proenzyme. Formation of the active enzyme involves a self-maturation process in which the active site pyruvoyl group is generated from an internal serine residue via an autocatalytic post-translational modification. Two non-identical subunits are generated from the proenzyme in this reaction, and the pyruvate is formed at the N-terminus of the alpha chain, which is derived from the carboxyl end of the proenzyme. The autoendoproteolytic cleavage occurs by a canonical serine protease mechanism, in which the side chain hydroxyl group of the serine supplies its oxygen atom to form the C-terminus of the beta chain, while the remainder of the serine residue undergoes an oxidative deamination to produce ammonia and the pyruvoyl prosthetic group on the alpha chain. During this reaction, the Ser that is part of the protease active site of the proenzyme becomes the pyruvoyl prosthetic group, which constitutes an essential element of the active site of the mature decarboxylase.

It is found in the cell membrane. It carries out the reaction a 1,2-diacyl-sn-glycero-3-phospho-L-serine + H(+) = a 1,2-diacyl-sn-glycero-3-phosphoethanolamine + CO2. Its pathway is phospholipid metabolism; phosphatidylethanolamine biosynthesis; phosphatidylethanolamine from CDP-diacylglycerol: step 2/2. Its function is as follows. Catalyzes the formation of phosphatidylethanolamine (PtdEtn) from phosphatidylserine (PtdSer). The sequence is that of Phosphatidylserine decarboxylase proenzyme from Escherichia coli (strain 55989 / EAEC).